Here is a 190-residue protein sequence, read N- to C-terminus: Isopentenyl-diphosphate Delta-isomerase (190 aa).

Mn(2+)-binding residues include histidine 27 and histidine 34. The Nudix hydrolase domain maps to 32–171; it reads PLHFAFSSYI…PFVFSPWMVD (140 aa). Cysteine 69 is a catalytic residue. Cysteine 69 is a Mg(2+) binding site. Histidine 71 serves as a coordination point for Mn(2+). Mg(2+) is bound at residue glutamate 89. 2 residues coordinate Mn(2+): glutamate 119 and glutamate 121. Glutamate 121 is an active-site residue.

This sequence belongs to the IPP isomerase type 1 family. Requires Mg(2+) as cofactor. Mn(2+) is required as a cofactor.

Its subcellular location is the cytoplasm. The enzyme catalyses isopentenyl diphosphate = dimethylallyl diphosphate. It participates in isoprenoid biosynthesis; dimethylallyl diphosphate biosynthesis; dimethylallyl diphosphate from isopentenyl diphosphate: step 1/1. Functionally, catalyzes the 1,3-allylic rearrangement of the homoallylic substrate isopentenyl (IPP) to its highly electrophilic allylic isomer, dimethylallyl diphosphate (DMAPP). This chain is Isopentenyl-diphosphate Delta-isomerase, found in Corynebacterium efficiens (strain DSM 44549 / YS-314 / AJ 12310 / JCM 11189 / NBRC 100395).